Here is a 216-residue protein sequence, read N- to C-terminus: MNESTINTVLFDLDGTLINTNELIIASFQHTLDHYYPGQYSREEILHFIGPSLFDTFSAMDPDLTDDMIQMYRTFNHEQHDLLVTEYETVLDTLKVLQDRGFKLGIVTTKIRDTVLMGLKLTGLEPFFEVIVTLDDVQNEKPHPEPVQLALSKLGSDPHEAVMVGDNYHDILSGQAAGTKTAGVAWSIKGEEALFKHRPDFMLKKMSDLLAIVGAD.

The active-site Nucleophile is Asp12.

This sequence belongs to the HAD-like hydrolase superfamily. PpaX family. Mg(2+) is required as a cofactor.

The enzyme catalyses diphosphate + H2O = 2 phosphate + H(+). Functionally, hydrolyzes pyrophosphate formed during P-Ser-HPr dephosphorylation by HPrK/P. Might play a role in controlling the intracellular pyrophosphate pool. The chain is Pyrophosphatase PpaX from Bacillus pumilus (strain SAFR-032).